The chain runs to 500 residues: NAD(P)H-quinone oxidoreductase subunit 2 B, chloroplastic (500 aa).

The next 13 helical transmembrane spans lie at 14-34 (SILP…IDLT), 41-61 (WLYF…LFQL), 78-98 (FNGI…PLSM), 116-136 (LTAT…IIFI), 166-186 (LLMG…LYGL), 211-231 (ISIV…LVPF), 242-262 (APTS…LALA), 277-297 (WHLI…FIAI), 305-325 (MLAY…IAGD), 335-355 (YMLF…LFGL), 376-396 (ASFL…AGFF), 409-429 (GLYL…YYYL), and 467-487 (IIIC…VIAI).

This sequence belongs to the complex I subunit 2 family. In terms of assembly, NDH is composed of at least 16 different subunits, 5 of which are encoded in the nucleus.

The protein resides in the plastid. Its subcellular location is the chloroplast thylakoid membrane. The catalysed reaction is a plastoquinone + NADH + (n+1) H(+)(in) = a plastoquinol + NAD(+) + n H(+)(out). The enzyme catalyses a plastoquinone + NADPH + (n+1) H(+)(in) = a plastoquinol + NADP(+) + n H(+)(out). Its function is as follows. NDH shuttles electrons from NAD(P)H:plastoquinone, via FMN and iron-sulfur (Fe-S) centers, to quinones in the photosynthetic chain and possibly in a chloroplast respiratory chain. The immediate electron acceptor for the enzyme in this species is believed to be plastoquinone. Couples the redox reaction to proton translocation, and thus conserves the redox energy in a proton gradient. In Anthoceros angustus (Hornwort), this protein is NAD(P)H-quinone oxidoreductase subunit 2 B, chloroplastic.